Consider the following 972-residue polypeptide: Hemoglobin and hemoglobin-haptoglobin-binding protein (972 aa).

A signal peptide spans 1–22; sequence MKANKLSAITLCILGYAHTVYA. The TonB box signature appears at 32-39; sequence ETIVVSSE. A TBDR plug domain is found at 38–167; the sequence is SEDDSVHNKN…LGGTVSFESK (130 aa). The 798-residue stretch at 175–972 folds into the TBDR beta-barrel domain; sequence DKNYHFGYKT…NFRVNAEITF (798 aa). Positions 955–972 match the TonB C-terminal box motif; the sequence is KRFNAPGRNFRVNAEITF.

This sequence belongs to the TonB-dependent receptor family. Hemoglobin/haptoglobin binding protein subfamily.

The protein resides in the cell outer membrane. Functionally, acts as a receptor for hemoglobin or the hemoglobin/haptoglobin complex of the host and is required for heme uptake. May be involved in virulence. In Haemophilus ducreyi (strain 35000HP / ATCC 700724), this protein is Hemoglobin and hemoglobin-haptoglobin-binding protein.